A 227-amino-acid polypeptide reads, in one-letter code: Isopentenyl-diphosphate Delta-isomerase 1 (227 aa).

K36 lines the substrate pocket. Mg(2+)-binding residues include H40 and H51. The Nudix hydrolase domain occupies 49–199; the sequence is LLHRAFSVFL…EIKITPWFKI (151 aa). Substrate-binding residues include R70 and K74. C86 is an active-site residue. S87 is a substrate binding site. Residues E146 and E148 each contribute to the Mg(2+) site. The active site involves E148. K176 is subject to N6-acetyllysine. The short motif at 225–227 is the Microbody targeting signal element; it reads YRM.

The protein belongs to the IPP isomerase type 1 family. As to quaternary structure, monomer. Mg(2+) is required as a cofactor.

The protein resides in the peroxisome. It catalyses the reaction isopentenyl diphosphate = dimethylallyl diphosphate. It participates in isoprenoid biosynthesis; dimethylallyl diphosphate biosynthesis; dimethylallyl diphosphate from isopentenyl diphosphate: step 1/1. In terms of biological role, catalyzes the 1,3-allylic rearrangement of the homoallylic substrate isopentenyl (IPP) to its highly electrophilic allylic isomer, dimethylallyl diphosphate (DMAPP). The polypeptide is Isopentenyl-diphosphate Delta-isomerase 1 (IDI1) (Homo sapiens (Human)).